A 544-amino-acid polypeptide reads, in one-letter code: Phenylalanine--tRNA ligase beta subunit (544 aa).

The B5 domain maps to 268-343 (LIHKIQNVRE…MSIGYNNLEP (76 aa)). Residues Asp321, Asp327, Glu330, and Asp331 each contribute to the Mg(2+) site.

Belongs to the phenylalanyl-tRNA synthetase beta subunit family. Type 2 subfamily. As to quaternary structure, tetramer of two alpha and two beta subunits. It depends on Mg(2+) as a cofactor.

It localises to the cytoplasm. The catalysed reaction is tRNA(Phe) + L-phenylalanine + ATP = L-phenylalanyl-tRNA(Phe) + AMP + diphosphate + H(+). This is Phenylalanine--tRNA ligase beta subunit from Saccharolobus solfataricus (strain ATCC 35092 / DSM 1617 / JCM 11322 / P2) (Sulfolobus solfataricus).